A 627-amino-acid chain; its full sequence is Carene synthase 3, chloroplastic (627 aa).

The N-terminal 36 residues, 1–36 (MSVISIVPLASKSCLYKSLMSSTHELKALCRPIATL), are a transit peptide targeting the chloroplast. Mg(2+) is bound by residues Asp378, Asp382, and Asp530. The DDXXD motif signature appears at 378–382 (DDMYD).

The protein belongs to the terpene synthase family. Tpsd subfamily. It depends on Mg(2+) as a cofactor. The cofactor is Mn(2+).

The protein resides in the plastid. Its subcellular location is the chloroplast. The catalysed reaction is (2E)-geranyl diphosphate = (+)-car-3-ene + diphosphate. The protein operates within terpene metabolism; oleoresin biosynthesis. Functionally, terpene synthase (TPS) involved in defensive oleoresin formation in conifers in response to insect attack or other injury. The chain is Carene synthase 3, chloroplastic (TPS-3car3) from Picea sitchensis (Sitka spruce).